The primary structure comprises 169 residues: Neudesin (169 aa).

Residues 1-28 (MAGPAPGRRLVALALIVALAVGLPTAGA) form the signal peptide. A Cytochrome b5 heme-binding domain is found at 41–126 (VRLFTEEELA…EELESLDDVF (86 aa)). An N6-acetyllysine modification is found at Lys-133. Residues 148–169 (DGSPNLDFKPEDQPHFDIKDEF) are disordered. The span at 155–169 (FKPEDQPHFDIKDEF) shows a compositional bias: basic and acidic residues.

It belongs to the cytochrome b5 family. MAPR subfamily. Interacts with PINK1 and PARK7.

It is found in the secreted. It localises to the extracellular space. Its subcellular location is the mitochondrion. The protein resides in the endoplasmic reticulum. In terms of biological role, acts as a neurotrophic factor in postnatal mature neurons enhancing neuronal survival. Promotes cell proliferation and neurogenesis in undifferentiated neural progenitor cells at the embryonic stage and inhibits differentiation of astrocytes. Its neurotrophic activity is exerted via MAPK1/ERK2, MAPK3/ERK1 and AKT1/AKT pathways. Neurotrophic activity is enhanced by binding to heme. Also acts as an anorexigenic neurotrophic factor that contributes to energy balance. In Bos taurus (Bovine), this protein is Neudesin (NENF).